Consider the following 360-residue polypeptide: Lipid-A-disaccharide synthase (360 aa).

It belongs to the LpxB family.

The enzyme catalyses a lipid X + a UDP-2-N,3-O-bis[(3R)-3-hydroxyacyl]-alpha-D-glucosamine = a lipid A disaccharide + UDP + H(+). The protein operates within bacterial outer membrane biogenesis; LPS lipid A biosynthesis. Its function is as follows. Condensation of UDP-2,3-diacylglucosamine and 2,3-diacylglucosamine-1-phosphate to form lipid A disaccharide, a precursor of lipid A, a phosphorylated glycolipid that anchors the lipopolysaccharide to the outer membrane of the cell. The sequence is that of Lipid-A-disaccharide synthase from Helicobacter pylori (strain P12).